A 460-amino-acid polypeptide reads, in one-letter code: Rab-3A-interacting protein (460 aa).

Phosphoserine occurs at positions 147, 149, 247, 250, 272, and 280. Residues 149-244 (SVLEVREKGY…EVAALKTLVL (96 aa)) adopt a coiled-coil conformation. Residues 246-280 (SSPTSPTQEPLAAGKTPFKRGHTRNKSTSSAMSGS) are disordered. Over residues 271-280 (KSTSSAMSGS) the composition is skewed to polar residues.

Belongs to the SEC2 family. Homodimer. Interacts with the N-terminal region of SSX2. Interacts with the GDP-bound forms of RAB8A and RAB8B. The interaction with RAB8A is prevented by phosphorylation of RAB8A at 'Thr-72'. Interacts with the GDP-bound forms of RAB3A and RAB3D. Interacts with DCDC1. Interacts (via the N-terminal region) with TRAPPC14; this interaction mediates RAB3IP association with the TRAPP II complex. Forms a heterotetramer with RAB11A where RAB3IP homodimer binds two RAB11A subunits. Forms a complex with RAB11A and RAB11FIP3, probably a heterohexamer with two of each protein subunit, where Rabin8/RAB3IP and RAB11FIP3 simultaneously bind to RAB11A; the complex promotes preciliary trafficking. Forms a complex containing RAB11A, ASAP1, RAB3IP, RAP11FIP3 and ARF4; the complex promotes preciliary trafficking; the complex binds to RHO in photoreceptor cells and promotes RHO ciliary transport. As to expression, ubiquitously expressed. Expressed at highest level in testis.

The protein resides in the cytoplasm. The protein localises to the nucleus. It localises to the cytoskeleton. It is found in the cell projection. Its subcellular location is the lamellipodium. Its function is as follows. Guanine nucleotide exchange factor (GEF) which may activate RAB8A and RAB8B. Promotes the exchange of GDP to GTP, converting inactive GDP-bound Rab proteins into their active GTP-bound form. Mediates the release of GDP from RAB8A and RAB8B but not from RAB3A or RAB5. Modulates actin organization and promotes polarized transport of RAB8A-specific vesicles to the cell surface. Together with RAB11A, RAB8A, the exocyst complex, PARD3, PRKCI, ANXA2, CDC42 and DNMBP promotes transcytosis of PODXL to the apical membrane initiation sites (AMIS), apical surface formation and lumenogenesis. Together with RAB11A and FIP3/RAB11FIP3, parts of the ciliary targeting complex that promotes preciliary vesicle trafficking to mother centriole and ciliogenesis initiation. Part of the ciliary targeting complex containing Rab11, ASAP1, RAB3IP and RAB11FIP3 and ARF4 that promotes RAB3IP preciliary vesicle trafficking to mother centriole and ciliogenesis initiation. The sequence is that of Rab-3A-interacting protein (Rab3ip) from Rattus norvegicus (Rat).